A 360-amino-acid chain; its full sequence is DNA replication and repair protein RecF (360 aa).

30 to 37 contacts ATP; it reads GANGSGKT.

This sequence belongs to the RecF family.

It is found in the cytoplasm. Its function is as follows. The RecF protein is involved in DNA metabolism; it is required for DNA replication and normal SOS inducibility. RecF binds preferentially to single-stranded, linear DNA. It also seems to bind ATP. The chain is DNA replication and repair protein RecF from Acinetobacter baumannii (strain ATCC 17978 / DSM 105126 / CIP 53.77 / LMG 1025 / NCDC KC755 / 5377).